The chain runs to 238 residues: Peptidyl-tRNA hydrolase (238 aa).

Tyrosine 14 is a tRNA binding site. The active-site Proton acceptor is the histidine 19. The tRNA site is built by tyrosine 64, asparagine 66, and asparagine 112. Positions 202–225 are disordered; it reads PAAQSHIHQARNSAQPKKLPETGP. Over residues 207–216 the composition is skewed to polar residues; that stretch reads HIHQARNSAQ.

Belongs to the PTH family. Monomer.

Its subcellular location is the cytoplasm. The catalysed reaction is an N-acyl-L-alpha-aminoacyl-tRNA + H2O = an N-acyl-L-amino acid + a tRNA + H(+). Its function is as follows. Hydrolyzes ribosome-free peptidyl-tRNAs (with 1 or more amino acids incorporated), which drop off the ribosome during protein synthesis, or as a result of ribosome stalling. Catalyzes the release of premature peptidyl moieties from peptidyl-tRNA molecules trapped in stalled 50S ribosomal subunits, and thus maintains levels of free tRNAs and 50S ribosomes. This chain is Peptidyl-tRNA hydrolase, found in Agrobacterium fabrum (strain C58 / ATCC 33970) (Agrobacterium tumefaciens (strain C58)).